Here is a 278-residue protein sequence, read N- to C-terminus: tRNA pseudouridine synthase A (278 aa).

The active-site Nucleophile is the Asp52. Tyr110 serves as a coordination point for substrate. The interval Ser259–Glu278 is disordered. Residues Arg261–Glu278 show a composition bias toward polar residues.

The protein belongs to the tRNA pseudouridine synthase TruA family. In terms of assembly, homodimer.

The catalysed reaction is uridine(38/39/40) in tRNA = pseudouridine(38/39/40) in tRNA. Formation of pseudouridine at positions 38, 39 and 40 in the anticodon stem and loop of transfer RNAs. This chain is tRNA pseudouridine synthase A, found in Chloroflexus aurantiacus (strain ATCC 29366 / DSM 635 / J-10-fl).